Consider the following 123-residue polypeptide: Small ribosomal subunit protein uS12 (123 aa).

D90 carries the post-translational modification 3-methylthioaspartic acid.

It belongs to the universal ribosomal protein uS12 family. Part of the 30S ribosomal subunit. Contacts proteins S8 and S17. May interact with IF1 in the 30S initiation complex.

In terms of biological role, with S4 and S5 plays an important role in translational accuracy. Functionally, interacts with and stabilizes bases of the 16S rRNA that are involved in tRNA selection in the A site and with the mRNA backbone. Located at the interface of the 30S and 50S subunits, it traverses the body of the 30S subunit contacting proteins on the other side and probably holding the rRNA structure together. The combined cluster of proteins S8, S12 and S17 appears to hold together the shoulder and platform of the 30S subunit. In Ehrlichia ruminantium (strain Gardel), this protein is Small ribosomal subunit protein uS12.